We begin with the raw amino-acid sequence, 106 residues long: MIQITPAAQAAIKGAIEGAGQPVAGLRLMVQSGGCAGLKYGMSLELTEAPDDLVVEAEGLRVLIDPQSGTYLNGVTIDFVTSLEGTGFVFDNPNAKGGCGCGKSFC.

It belongs to the HesB/IscA family.

This is an uncharacterized protein from Cereibacter sphaeroides (Rhodobacter sphaeroides).